The following is a 367-amino-acid chain: Chorismate synthase (367 aa).

R48 provides a ligand contact to NADP(+). Residues 125 to 127, 243 to 244, G283, 298 to 302, and R324 contribute to the FMN site; these read RSS, NA, and KPTSS.

Belongs to the chorismate synthase family. In terms of assembly, homotetramer. FMNH2 is required as a cofactor.

It catalyses the reaction 5-O-(1-carboxyvinyl)-3-phosphoshikimate = chorismate + phosphate. It participates in metabolic intermediate biosynthesis; chorismate biosynthesis; chorismate from D-erythrose 4-phosphate and phosphoenolpyruvate: step 7/7. Catalyzes the anti-1,4-elimination of the C-3 phosphate and the C-6 proR hydrogen from 5-enolpyruvylshikimate-3-phosphate (EPSP) to yield chorismate, which is the branch point compound that serves as the starting substrate for the three terminal pathways of aromatic amino acid biosynthesis. This reaction introduces a second double bond into the aromatic ring system. In Psychrobacter sp. (strain PRwf-1), this protein is Chorismate synthase.